We begin with the raw amino-acid sequence, 310 residues long: MRSDVSEIEKETKCPECGSDDLRGDYERAEIVCGKCGLVIDDNLVDMGPEWRAFDHEQRDKRTRVGAPITYTIHDKGLSTMIDWRNKDIYGRDIPARNRAQWYRLRKWQRKIRISGATERNLAFALSELDRDSSRLGLPRSVREAASMVYRRAVENKLIRGRSIEGVVAASLYAACRKCNVPRTLDEIAEVSRVSKKEVGRTYRFLTRELNIKLPPTSPVDYVPRFASELGLSGEVQSKAIEIIEMAMENGLTSGRGPTGVAAAALYIASVLLGEHKTQRDVAEVAGVTEVTIRNRYKELTEQLDLGVTL.

A TFIIB-type zinc finger spans residues 9 to 41 (EKETKCPECGSDDLRGDYERAEIVCGKCGLVID). Zn(2+)-binding residues include Cys14, Cys17, Cys33, and Cys36. 2 consecutive repeat copies span residues 127 to 210 (SELD…TREL) and 221 to 302 (DYVP…ELTE).

Belongs to the TFIIB family.

Functionally, stabilizes TBP binding to an archaeal box-A promoter. Also responsible for recruiting RNA polymerase II to the pre-initiation complex (DNA-TBP-TFIIB). This is Transcription initiation factor IIB from Methanothermobacter thermautotrophicus (strain ATCC 29096 / DSM 1053 / JCM 10044 / NBRC 100330 / Delta H) (Methanobacterium thermoautotrophicum).